Consider the following 901-residue polypeptide: Translation initiation factor IF-2 (901 aa).

The segment at 48–313 (HLNREHGGSS…SSLQQGFTKP (266 aa)) is disordered. The span at 68 to 82 (STLSVPGTGGKSKSV) shows a compositional bias: polar residues. The segment covering 106–226 (ALAKREAEEQ…RMAEANEGKW (121 aa)) has biased composition (basic and acidic residues). Residues 263–277 (ARGRGGKAAKQKKGS) show a composition bias toward basic residues. Residues 278–291 (KLSESKADREEARA) are compositionally biased toward basic and acidic residues. In terms of domain architecture, tr-type G spans 400-569 (PRAPVVTIMG…LLQAEVLELK (170 aa)). Residues 409 to 416 (GHVDHGKT) are G1. A GTP-binding site is contributed by 409-416 (GHVDHGKT). Residues 434-438 (GITQH) form a G2 region. The tract at residues 455–458 (DTPG) is G3. GTP contacts are provided by residues 455–459 (DTPGH) and 509–512 (NKID). Positions 509-512 (NKID) are G4. The interval 545–547 (SAK) is G5.

Belongs to the TRAFAC class translation factor GTPase superfamily. Classic translation factor GTPase family. IF-2 subfamily.

It localises to the cytoplasm. One of the essential components for the initiation of protein synthesis. Protects formylmethionyl-tRNA from spontaneous hydrolysis and promotes its binding to the 30S ribosomal subunits. Also involved in the hydrolysis of GTP during the formation of the 70S ribosomal complex. The protein is Translation initiation factor IF-2 of Edwardsiella ictaluri (strain 93-146).